Reading from the N-terminus, the 253-residue chain is uncharacterized protein (253 aa).

Position 7–14 (7–14 (GKGGVGKT)) interacts with ATP.

To M.jannaschii MJ0084 and MJ0823.

This is an uncharacterized protein from Methanocaldococcus jannaschii (strain ATCC 43067 / DSM 2661 / JAL-1 / JCM 10045 / NBRC 100440) (Methanococcus jannaschii).